Here is a 387-residue protein sequence, read N- to C-terminus: Carboxyaminopropylagmatine decarboxylase (387 aa).

K52 bears the N6-(pyridoxal phosphate)lysine mark.

It belongs to the Orn/Lys/Arg decarboxylase class-II family. The cofactor is pyridoxal 5'-phosphate.

The enzyme catalyses N(1)-[(S)-3-amino-3-carboxypropyl]agmatine + H(+) = N(1)-(3-aminopropyl)agmatine + CO2. Its pathway is amine and polyamine biosynthesis; spermidine biosynthesis. Functionally, decarboxylase involved in the biosynthesis of spermidine via the carboxyaminopropylagmatine (CAPA) pathway. Catalyzes the decarboxylation of CAPA to form aminopropylagmatine (APA). Can also decarboxylate carboxyspermidine and carboxynorspermidine, but not ornithine, arginine, lysine and meso-diaminopimelate. The sequence is that of Carboxyaminopropylagmatine decarboxylase from Synechocystis sp. (strain ATCC 27184 / PCC 6803 / Kazusa).